The sequence spans 523 residues: Peptidyl-prolyl cis-trans isomerase 4 (523 aa).

Residues 38 to 111 enclose the U-box domain; it reads KRLPINHCSL…GKFRCPVTFR (74 aa). The region spanning 278–433 is the PPIase cyclophilin-type domain; that stretch reads KNAFVRLVTN…VSVVIMRAEV (156 aa).

This sequence belongs to the cyclophilin-type PPIase family. PPIL2 subfamily. As to quaternary structure, interacts with mep-1. Exclusively in the larval body wall striated muscle cells.

It localises to the nucleus. The catalysed reaction is [protein]-peptidylproline (omega=180) = [protein]-peptidylproline (omega=0). The enzyme catalyses S-ubiquitinyl-[E2 ubiquitin-conjugating enzyme]-L-cysteine + [acceptor protein]-L-lysine = [E2 ubiquitin-conjugating enzyme]-L-cysteine + N(6)-ubiquitinyl-[acceptor protein]-L-lysine.. It participates in protein modification; protein ubiquitination. Its function is as follows. May catalyze the cis-trans isomerization of proline imidic peptide bonds in oligopeptides thereby assisting the folding of proteins. May also function as a chaperone, playing a role in intracellular transport of proteins. May also have a protein ubiquitin ligase activity acting as an E3 ubiquitin protein ligase or as a ubiquitin-ubiquitin ligase promoting elongation of ubiquitin chains on proteins. Influences the hermaphrodite switch from spermatogenesis to oogenesis. Required for body wall muscle cell development. This chain is Peptidyl-prolyl cis-trans isomerase 4 (cyn-4), found in Caenorhabditis elegans.